A 60-amino-acid polypeptide reads, in one-letter code: Large ribosomal subunit protein uL30 (60 aa).

The protein belongs to the universal ribosomal protein uL30 family. In terms of assembly, part of the 50S ribosomal subunit.

This chain is Large ribosomal subunit protein uL30, found in Salinispora arenicola (strain CNS-205).